Consider the following 158-residue polypeptide: Small ribosomal subunit protein uS13 (158 aa).

It belongs to the universal ribosomal protein uS13 family. In terms of assembly, part of the 30S ribosomal subunit. Forms a loose heterodimer with protein S19. Forms two bridges to the 50S subunit in the 70S ribosome.

Located at the top of the head of the 30S subunit, it contacts several helices of the 16S rRNA. In the 70S ribosome it contacts the 23S rRNA (bridge B1a) and protein L5 of the 50S subunit (bridge B1b), connecting the 2 subunits; these bridges are implicated in subunit movement. The chain is Small ribosomal subunit protein uS13 from Picrophilus torridus (strain ATCC 700027 / DSM 9790 / JCM 10055 / NBRC 100828 / KAW 2/3).